We begin with the raw amino-acid sequence, 452 residues long: Phosphatidylinositol N-acetylglucosaminyltransferase GPI3 subunit (452 aa).

A helical membrane pass occupies residues 407 to 427; the sequence is LYLLCGIVEYMLFFLLEWLYP.

It belongs to the glycosyltransferase group 1 family. As to quaternary structure, component of the phosphatidylinositol N-acetylglucosaminyltransferase complex composed of at least GPI1, GPI2, GPI3, GPI15, GPI19 and ERI1.

The protein localises to the endoplasmic reticulum membrane. The catalysed reaction is a 1,2-diacyl-sn-glycero-3-phospho-(1D-myo-inositol) + UDP-N-acetyl-alpha-D-glucosamine = a 6-(N-acetyl-alpha-D-glucosaminyl)-1-(1,2-diacyl-sn-glycero-3-phospho)-1D-myo-inositol + UDP + H(+). It functions in the pathway glycolipid biosynthesis; glycosylphosphatidylinositol-anchor biosynthesis. Inhibited by Ras, probably via the interaction between RAS2 and ERI1. Its function is as follows. Catalytic subunit in the complex catalyzing the transfer of N-acetylglucosamine from UDP-N-acetylglucosamine to phosphatidylinositol, the first step of GPI biosynthesis. This Saccharomyces cerevisiae (strain YJM789) (Baker's yeast) protein is Phosphatidylinositol N-acetylglucosaminyltransferase GPI3 subunit (SPT14).